The primary structure comprises 182 residues: Adenine phosphoribosyltransferase (182 aa).

The protein belongs to the purine/pyrimidine phosphoribosyltransferase family. In terms of assembly, homodimer.

The protein resides in the cytoplasm. It catalyses the reaction AMP + diphosphate = 5-phospho-alpha-D-ribose 1-diphosphate + adenine. It functions in the pathway purine metabolism; AMP biosynthesis via salvage pathway; AMP from adenine: step 1/1. Catalyzes a salvage reaction resulting in the formation of AMP, that is energically less costly than de novo synthesis. The sequence is that of Adenine phosphoribosyltransferase from Streptomyces avermitilis (strain ATCC 31267 / DSM 46492 / JCM 5070 / NBRC 14893 / NCIMB 12804 / NRRL 8165 / MA-4680).